We begin with the raw amino-acid sequence, 279 residues long: Acetyl-coenzyme A carboxylase carboxyl transferase subunit beta (279 aa).

The region spanning 23–279 is the CoA carboxyltransferase N-terminal domain; that stretch reads MWWKCDECGA…IVRLMTMLAP (257 aa). Positions 27, 30, 46, and 49 each coordinate Zn(2+). The segment at 27–49 adopts a C4-type zinc-finger fold; sequence CDECGAMLHKKQLEDNFYTCSEC.

It belongs to the AccD/PCCB family. As to quaternary structure, acetyl-CoA carboxylase is a heterohexamer composed of biotin carboxyl carrier protein (AccB), biotin carboxylase (AccC) and two subunits each of ACCase subunit alpha (AccA) and ACCase subunit beta (AccD). The cofactor is Zn(2+).

The protein localises to the cytoplasm. The catalysed reaction is N(6)-carboxybiotinyl-L-lysyl-[protein] + acetyl-CoA = N(6)-biotinyl-L-lysyl-[protein] + malonyl-CoA. It participates in lipid metabolism; malonyl-CoA biosynthesis; malonyl-CoA from acetyl-CoA: step 1/1. Functionally, component of the acetyl coenzyme A carboxylase (ACC) complex. Biotin carboxylase (BC) catalyzes the carboxylation of biotin on its carrier protein (BCCP) and then the CO(2) group is transferred by the transcarboxylase to acetyl-CoA to form malonyl-CoA. This chain is Acetyl-coenzyme A carboxylase carboxyl transferase subunit beta, found in Chlorobium phaeobacteroides (strain DSM 266 / SMG 266 / 2430).